Consider the following 365-residue polypeptide: Peptide chain release factor 1 (365 aa).

N5-methylglutamine is present on Gln236.

The protein belongs to the prokaryotic/mitochondrial release factor family. Methylated by PrmC. Methylation increases the termination efficiency of RF1.

The protein resides in the cytoplasm. Its function is as follows. Peptide chain release factor 1 directs the termination of translation in response to the peptide chain termination codons UAG and UAA. The sequence is that of Peptide chain release factor 1 from Latilactobacillus sakei subsp. sakei (strain 23K) (Lactobacillus sakei subsp. sakei).